A 254-amino-acid chain; its full sequence is CDP-diacylglycerol pyrophosphatase (254 aa).

The helical transmembrane segment at 6–26 (YFLLALLVAILAALAGGYYWL) threads the bilayer.

The protein belongs to the Cdh family.

The protein resides in the cell inner membrane. It catalyses the reaction a CDP-1,2-diacyl-sn-glycerol + H2O = a 1,2-diacyl-sn-glycero-3-phosphate + CMP + 2 H(+). It functions in the pathway phospholipid metabolism; CDP-diacylglycerol degradation; phosphatidate from CDP-diacylglycerol: step 1/1. The protein is CDP-diacylglycerol pyrophosphatase of Klebsiella pneumoniae (strain 342).